Consider the following 360-residue polypeptide: Codeine O-demethylase (360 aa).

A Fe2OG dioxygenase domain is found at 211 to 311 (GLQTMRMNYY…RLSIATFHDS (101 aa)). Y220 provides a ligand contact to 2-oxoglutarate. Residues H235, D237, and H292 each coordinate Fe cation. 2-oxoglutarate contacts are provided by R302 and S304.

This sequence belongs to the iron/ascorbate-dependent oxidoreductase family. L-ascorbate serves as cofactor. Fe cation is required as a cofactor. Mainly expressed in stems, capsules and leaves and, to a lower extent, in roots.

The catalysed reaction is codeine + 2-oxoglutarate + O2 = morphine + formaldehyde + succinate + CO2. It carries out the reaction thebaine + 2-oxoglutarate + O2 = oripavine + formaldehyde + succinate + CO2. The enzyme catalyses (S)-scoulerine + 2-oxoglutarate + O2 = (S)-3-O-demethylscoulerine + formaldehyde + succinate + CO2. It catalyses the reaction thebaine + 2-oxoglutarate + O2 = neopinone + formaldehyde + succinate + CO2. The catalysed reaction is (S)-reticuline + 2-oxoglutarate + O2 = (S)-6-O-demethylreticuline + formaldehyde + succinate + CO2. It carries out the reaction (S)-tetrahydropalmatine + S-adenosyl-L-methionine = (S)-cis-N-methyltetrahydropalmatine + S-adenosyl-L-homocysteine. It participates in alkaloid biosynthesis; morphine biosynthesis. Its activity is regulated as follows. Moderate substrate inhibition. Not inhibited in vitro by acylcyclohexanediones. Functionally, non-heme dioxygenase involved in biosynthesis of morphinan-type benzylisoquinoline and opiate alkaloids natural products. Mediates the conversion of codeine to morphine. Also catalyzes, with lower efficiency, the 3-O-demethylation of thebaine to oripavine and of (S)-scoulerine to 3-O-demethylscoulerine. Supports, with a lower turnover, the conversion of codeinone to morphinone, of thebaine to neopinone, and of neopine to neomorphine. Supports dealkylation reactions such as O,O-demethylenation in the metabolism of protopine, benzo[c]phenanthridine, and rhoeadine alkaloids; cleaves a methylenedioxy bridge leaving two hydroxyl groups. Catalyzes the O,O-demethylenation of methylenedioxy bridges on protopine alkaloids such as allocryptopine, cryptopine and protopine. No activity with (S)-reticuline, salutaridine, papaverine, (S)-corytuberine, oripavine, pavine or noscapine. This Papaver somniferum (Opium poppy) protein is Codeine O-demethylase.